The sequence spans 97 residues: MNLSTKQKQHLKGLAHPLKPVVLLGSNGLTEGVLAEIEQALEHHELIKVKIATEDRETKTLIVEAIVRETGACNVQVIGKTLVLYRPTKERKISLPR.

Residues 1-97 (MNLSTKQKQH…TKERKISLPR (97 aa)) form the CRM domain.

This is RNA-binding protein YhbY (yhbY) from Escherichia coli O157:H7.